The primary structure comprises 387 residues: Eukaryotic translation initiation factor 3 subunit M (387 aa).

The PCI domain occupies 181 to 340 (LSSKVMIELL…RKVHISSTMH (160 aa)).

The protein belongs to the eIF-3 subunit M family. As to quaternary structure, component of the eukaryotic translation initiation factor 3 (eIF-3) complex. The eIF-3 complex interacts with pix.

Its subcellular location is the cytoplasm. It localises to the golgi apparatus. Its function is as follows. Component of the eukaryotic translation initiation factor 3 (eIF-3) complex, which is involved in protein synthesis of a specialized repertoire of mRNAs and, together with other initiation factors, stimulates binding of mRNA and methionyl-tRNAi to the 40S ribosome. The eIF-3 complex specifically targets and initiates translation of a subset of mRNAs involved in cell proliferation. This Drosophila pseudoobscura pseudoobscura (Fruit fly) protein is Eukaryotic translation initiation factor 3 subunit M.